Consider the following 506-residue polypeptide: Probable alpha-L-arabinofuranosidase B (506 aa).

A signal peptide spans 1–26 (MLPQLSIERASVFALGLIATGSLVVA). Residues 27 to 343 (GPCDIYSAGG…ANIVAAKYAT (317 aa)) form a catalytic region. 3 disulfide bridges follow: C29–C39, C89–C94, and C184–C185. D227 is a binding site for substrate. The active-site Nucleophile is E229. Residue N230 coordinates substrate. N-linked (GlcNAc...) asparagine glycosylation occurs at N240. G304 lines the substrate pocket. D305 (proton donor) is an active-site residue. The ABD stretch occupies residues 344–506 (ASLTSGPKLT…VSWVISTGFA (163 aa)). A disulfide bridge links C409 with C447. Residues H424, N426, F427, D443, H471, L476, and D496 each contribute to the substrate site.

This sequence belongs to the glycosyl hydrolase 54 family.

The protein localises to the secreted. The enzyme catalyses Hydrolysis of terminal non-reducing alpha-L-arabinofuranoside residues in alpha-L-arabinosides.. The protein operates within glycan metabolism; L-arabinan degradation. Alpha-L-arabinofuranosidase involved in the degradation of arabinoxylan, a major component of plant hemicellulose. Able to hydrolyze 1,5-, 1,3- and 1,2-alpha-linkages not only in L-arabinofuranosyl oligosaccharides, but also in polysaccharides containing terminal non-reducing L-arabinofuranoses in side chains, like L-arabinan, arabinogalactan and arabinoxylan. The polypeptide is Probable alpha-L-arabinofuranosidase B (abfB) (Aspergillus fumigatus (strain ATCC MYA-4609 / CBS 101355 / FGSC A1100 / Af293) (Neosartorya fumigata)).